A 1312-amino-acid chain; its full sequence is Beta-N-acetylhexosaminidase (1312 aa).

The N-terminal stretch at Met1–Ala33 is a signal peptide. The segment covering Thr38–Glu59 has biased composition (polar residues). A disordered region spans residues Thr38 to Ala178. Basic and acidic residues predominate over residues Ala118 to Ala177. 2 catalytic domain regions span residues Arg176 to Ala616 and Glu621 to Thr1046. 2 consecutive G5 domains span residues Asn1059–Val1138 and Thr1150–Val1230. Residues Glu1244 to Ala1290 are disordered. The span at Thr1277–Thr1286 shows a compositional bias: basic and acidic residues. Positions Leu1281–Gly1285 match the LPXTG sorting signal motif. The residue at position 1284 (Thr1284) is a Pentaglycyl murein peptidoglycan amidated threonine. The propeptide at Gly1285–Asp1312 is removed by sortase.

The protein belongs to the glycosyl hydrolase 20 family.

Its subcellular location is the secreted. The protein localises to the cell wall. It carries out the reaction Hydrolysis of terminal non-reducing N-acetyl-D-hexosamine residues in N-acetyl-beta-D-hexosaminides.. This Streptococcus pneumoniae serotype 4 (strain ATCC BAA-334 / TIGR4) protein is Beta-N-acetylhexosaminidase (strH).